Here is a 412-residue protein sequence, read N- to C-terminus: Isovaleryl-CoA dehydrogenase, mitochondrial (412 aa).

A mitochondrion-targeting transit peptide spans 1–25 (MHKLFVARSVKSALFRIKNHQKPQF). Residues 154-163 (LAMSEPNAGS) and 187-189 (WCT) each bind FAD. Residue S163 coordinates substrate. Residues 209–210 (SK), Y264, and 271–274 (DLER) each bind substrate. The Proton acceptor role is filled by E273. FAD contacts are provided by residues R299, Q310, and 367–371 (QCLGG). Residue 394-395 (AG) coordinates substrate. 396 to 398 (TSE) lines the FAD pocket.

This sequence belongs to the acyl-CoA dehydrogenase family. As to quaternary structure, homotetramer. Requires FAD as cofactor. In terms of tissue distribution, expressed in flowers and tubers.

The protein localises to the mitochondrion. It carries out the reaction 3-methylbutanoyl-CoA + oxidized [electron-transfer flavoprotein] + H(+) = 3-methylbut-2-enoyl-CoA + reduced [electron-transfer flavoprotein]. It functions in the pathway amino-acid degradation; L-leucine degradation; (S)-3-hydroxy-3-methylglutaryl-CoA from 3-isovaleryl-CoA: step 1/3. Involved in the catabolism of amino acids. Uses isovaleryl-CoA as substrate. Minor activity detected with 2-methylpalmitoyl-CoA or 2-methylbutanoyl-CoA, but no activity with short- and medium-straight chain acyl-CoA esters or with 2-methylhexanoyl-CoA. In Solanum tuberosum (Potato), this protein is Isovaleryl-CoA dehydrogenase, mitochondrial (IVD).